The sequence spans 839 residues: uncharacterized protein (839 aa).

This is an uncharacterized protein from Mycoplasma pneumoniae (strain ATCC 29342 / M129 / Subtype 1) (Mycoplasmoides pneumoniae).